The chain runs to 154 residues: Myoglobin (154 aa).

Positions glycine 2–lysine 148 constitute a Globin domain. Histidine 65 is a binding site for nitrite. An O2-binding site is contributed by histidine 65. Histidine 94 contributes to the heme b binding site.

The protein belongs to the globin family. In terms of assembly, monomeric.

The protein resides in the cytoplasm. The protein localises to the sarcoplasm. It carries out the reaction Fe(III)-heme b-[protein] + nitric oxide + H2O = Fe(II)-heme b-[protein] + nitrite + 2 H(+). The enzyme catalyses H2O2 + AH2 = A + 2 H2O. Its function is as follows. Monomeric heme protein which primary function is to store oxygen and facilitate its diffusion within muscle tissues. Reversibly binds oxygen through a pentacoordinated heme iron and enables its timely and efficient release as needed during periods of heightened demand. Depending on the oxidative conditions of tissues and cells, and in addition to its ability to bind oxygen, it also has a nitrite reductase activity whereby it regulates the production of bioactive nitric oxide. Under stress conditions, like hypoxia and anoxia, it also protects cells against reactive oxygen species thanks to its pseudoperoxidase activity. This chain is Myoglobin (MB), found in Graptemys geographica (Common map turtle).